The primary structure comprises 358 residues: B3 domain-containing protein Os12g0592300 (358 aa).

The TF-B3 1 DNA-binding region spans 25–122 (RIRFFRLMTG…SFDVLIFDAS (98 aa)). The tract at residues 148 to 215 (YHLSDSEDTS…EKSDDDDEHA (68 aa)) is disordered. Residues 156-181 (TSTPSTFLVGSPHKASTSKKLNGKTK) are compositionally biased toward polar residues. A compositionally biased stretch (acidic residues) spans 203–215 (IEEEKSDDDDEHA). Positions 252-350 (FVTVLQAPQI…TMTVHVIGKV (99 aa)) form a DNA-binding region, TF-B3 2.

The protein resides in the nucleus. This Oryza sativa subsp. japonica (Rice) protein is B3 domain-containing protein Os12g0592300.